A 419-amino-acid polypeptide reads, in one-letter code: Protein-lysine N-methyltransferase EFM2 (419 aa).

Residues Trp222, 261–263, Asp290, Trp318, and Ala340 each bind S-adenosyl-L-methionine; that span reads GAG.

Belongs to the class I-like SAM-binding methyltransferase superfamily. METTL21 family.

It localises to the cytoplasm. Its function is as follows. S-adenosyl-L-methionine-dependent protein-lysine N-methyltransferase that mono- and dimethylates elongation factor 2 (EFT1/EFT2) at 'Lys-613' and methylates elongation factor 3A (YEF3). This chain is Protein-lysine N-methyltransferase EFM2, found in Saccharomyces cerevisiae (strain ATCC 204508 / S288c) (Baker's yeast).